The sequence spans 379 residues: Oxidoreductase chry3 (379 aa).

2 disordered regions span residues 1-23 and 126-150; these read MTTATKPHQGRFRYLTRGSQPTP and EGDDSAPAEEEADTQASSSDDTSHM. Over residues 126–138 the composition is skewed to acidic residues; sequence EGDDSAPAEEEAD.

Belongs to the asaB hydroxylase/desaturase family.

It participates in pigment biosynthesis. In terms of biological role, oxidoreductase; part of the gene cluster that mediates the biosynthesis of the yellow pigment chrysogine. Pyruvic acid and anthranilic acid are likely substrates for the nonribosomal peptide synthetase chry1/NRPS14, with pyruvic acid adenylated by the first A domain and anthranilic acid by the second. If pyruvic acid and anthranilic acid are merged and released from chry1/NRPS14 by hydrolysis, a subsequent amidation would lead to 2-pyruvoylaminobenzamide. This process is probably catalyzed by the amidotransferase chry2 using glutamine as amino donor. The dehydrogenase chry5 that has a terminal berberine bridge domain for C-N cyclization could catalyze the cyclization of 2-pyruvoylaminobenzamide to yield acetyl-4(3H)-quinazolidinone. A final reduction of acetyl-4(3H)-quinazolidinone catalyzed by the oxidoreductase chry4 would result in chrysogine. The protein is Oxidoreductase chry3 of Gibberella zeae (strain ATCC MYA-4620 / CBS 123657 / FGSC 9075 / NRRL 31084 / PH-1) (Wheat head blight fungus).